A 337-amino-acid chain; its full sequence is 2-oxoglutarate-Fe(II) type oxidoreductase (337 aa).

Positions 179-282 (AIATLRYLHY…RYSIPFFFTG (104 aa)) constitute a Fe2OG dioxygenase domain. Positions 205, 207, and 263 each coordinate Fe cation. R273 serves as a coordination point for 2-oxoglutarate.

Belongs to the iron/ascorbate-dependent oxidoreductase family. The cofactor is Fe(2+). Endocrocin is specifically produced in conidia.

It participates in secondary metabolite biosynthesis. Its function is as follows. 2-oxoglutarate-Fe(II) type oxidoreductase; part of the gene cluster that mediates the biosynthesis of endocrocin, a simple anthraquinone interesting for many biotechnological applications. The pathway begins with the synthesis of atrochrysone thioester by the polyketide synthase (PKS) encA. The atrochrysone carboxyl ACP thioesterase encB then breaks the thioester bond and releases the atrochrysone carboxylic acid from encA. The atrochrysone carboxylic acid is then converted to endocrocin anthrone which is further oxidized into endocrocin by encC. The exact function of encD has not been identified yet, but it negatively regulates endocrocin production, likely through the modification of endocrocin itself. This Aspergillus fumigatus (strain ATCC MYA-4609 / CBS 101355 / FGSC A1100 / Af293) (Neosartorya fumigata) protein is 2-oxoglutarate-Fe(II) type oxidoreductase.